Consider the following 362-residue polypeptide: Histidinol-phosphate aminotransferase (362 aa).

Residue lysine 211 is modified to N6-(pyridoxal phosphate)lysine.

It belongs to the class-II pyridoxal-phosphate-dependent aminotransferase family. Histidinol-phosphate aminotransferase subfamily. As to quaternary structure, homodimer. The cofactor is pyridoxal 5'-phosphate.

The enzyme catalyses L-histidinol phosphate + 2-oxoglutarate = 3-(imidazol-4-yl)-2-oxopropyl phosphate + L-glutamate. It participates in amino-acid biosynthesis; L-histidine biosynthesis; L-histidine from 5-phospho-alpha-D-ribose 1-diphosphate: step 7/9. The sequence is that of Histidinol-phosphate aminotransferase from Serratia proteamaculans (strain 568).